Consider the following 2531-residue polypeptide: Highly reducing polyketide synthase gloL (2531 aa).

The 421-residue stretch at 15–435 (YEPLAIVGMG…GANAHVILDS (421 aa)) folds into the Ketosynthase family 3 (KS3) domain. Active-site for beta-ketoacyl synthase activity residues include Cys187, His322, and His358. A disordered region spans residues 449-525 (TNGLSVNGHS…GHSVNGHSKP (77 aa)). A compositionally biased stretch (low complexity) spans 453-503 (SVNGHSINGNSVNGHSVNGHSTNGHSINGNSVNGHSVNGNSVNGHSTNGHS). Residues 505–521 (NGHSANGNSINGHSVNG) are compositionally biased toward polar residues. A malonyl-CoA:ACP transacylase (MAT) domain region spans residues 602–909 (MVFTGQGAQW…VTALERGKDC (308 aa)). The interval 971-1099 (HEILGSRTVE…GQIRSGTDNP (129 aa)) is N-terminal hotdog fold. Residues 971-1251 (HEILGSRTVE…GGQFSPIEED (281 aa)) are dehydratase (DH) domain. Positions 971-1254 (HEILGSRTVE…FSPIEEDSSD (284 aa)) constitute a PKS/mFAS DH domain. Residue His1003 is the Proton acceptor; for dehydratase activity of the active site. A C-terminal hotdog fold region spans residues 1109 to 1254 (DHPRSVPSPY…FSPIEEDSSD (146 aa)). The active-site Proton donor; for dehydratase activity is Asp1169. The segment at 1419–1597 (DFFTAAGHSK…FSGCDATVYD (179 aa)) is methyltransferase (CMet) domain. The enoyl reductase (ER) (ER) domain stretch occupies residues 1806-2114 (GLLQTLRWVP…KGSHIGKIVV (309 aa)). The interval 2139-2312 (GYLLVGGLGG…ASVVDIGVMG (174 aa)) is ketoreductase (KR) domain. In terms of domain architecture, Carrier spans 2413 to 2505 (MSSVETDSSI…ALGLLTIEGL (93 aa)). At Ser2464 the chain carries O-(pantetheine 4'-phosphoryl)serine.

Its pathway is mycotoxin biosynthesis. In terms of biological role, highly reducing polyketide synthase; part of the gene cluster that mediates the biosynthesis of pneumocandins, lipohexapeptides of the echinocandin family that prevent fungal cell wall formation by non-competitive inhibition of beta-1,3-glucan synthase. The 10,12-dimethylmyristoyl side chain is synthesized by the reducing polyketide synthase gloL/GLPKS4. The thioesterase gloN/GLHYD exclusively interacts with gloL/GLPKS4 to maintain turnover of the polyketide side chain. The 10R,12S-dimethylmyristic acid is then transferred to the first thiolation domain of the nonribosomal peptide synthetase gloA/GLNRPS4 by the acyl-AMP ligase gloD/GLligase, followed by its acylation to L-ornithine to trigger elongation of the cyclic hexapeptide. L-ornithine, 4R-hydroxyl-L-proline (generated from L-proline by the dioxygenase gloF/GLOXY2), 3S-hydroxyl-L-homotyrosine (generated by gloG/GLHtyB, gloH/GLHtyA, gloI/GLHtyC, gloJ/GLHtyD and hydroxylated at C-3 by the dioxygenase gloM/GLOXY1), 3R-hydroxyl-L-glutamine (generated from L-glutamine probably by the dioxygenase gloE/GLOXY3) and 3S-hydroxyl-L-proline (generated from L-proline by the dioxygenase gloF/GLOXY2 to yield pneumocandin B0), or 3S-hydroxyl-4S-methyl-L-proline (generated from L-leucine by the dioxygenase gloC/GLOXY4 to yield pneumocandin A0) are sequentially added to the growing chain. The last C domain of gloA/GLNRPS4 is proposed to be responsible for cyclization by condensation to form the peptide bond between L-ornithine and 3S-hydroxyl-4S-methyl-L-proline (for pneumocandin A0) or 3S-hydroxyl-L-proline (for pneumocandin B0). Finally, the subsequent C-4 hydroxylation of 3S-hydroxyl-L-homotyrosine and L-ornithine dihydroxylation at C-4 and C-5 are performed by the cytochrome P450 monooxygenases gloP/GLP450-1 and gloO/GLP450-2, respectively. The protein is Highly reducing polyketide synthase gloL of Glarea lozoyensis (strain ATCC 20868 / MF5171).